The sequence spans 213 residues: Probable GH family 25 lysozyme 4 (213 aa).

An N-terminal signal peptide occupies residues 1-19; it reads MRLFLLLITFIALFGAINA. The region spanning 21–213 is the Ch-type lysozyme domain; the sequence is SGVDISQGSS…VGYDFNWYPN (193 aa). Active-site residues include Asp24, Asp112, and Glu114.

Belongs to the glycosyl hydrolase 25 family.

The protein localises to the secreted. The catalysed reaction is Hydrolysis of (1-&gt;4)-beta-linkages between N-acetylmuramic acid and N-acetyl-D-glucosamine residues in a peptidoglycan and between N-acetyl-D-glucosamine residues in chitodextrins.. The sequence is that of Probable GH family 25 lysozyme 4 from Dictyostelium discoideum (Social amoeba).